We begin with the raw amino-acid sequence, 206 residues long: Flavin reductase (NADPH) (206 aa).

NADP(+) contacts are provided by Gly-10, Thr-12, Gly-13, Asn-14, Thr-15, Arg-35, Ser-38, and Arg-39. A Phosphoserine modification is found at Ser-42. NADP(+) is bound by residues Asp-54, Val-55, Leu-75, Gly-76, and Arg-78. Ser-82 is subject to Phosphoserine. Positions 87, 109, 132, 153, and 154 each coordinate NADP(+). The S-nitroso-cysteine intermediate; for S-nitroso-CoA-dependent nitrosyltransferase activity role is filled by Cys-109. Residue Cys-188 is the S-nitroso-cysteine intermediate; for S-nitroso-CoA-dependent nitrosyltransferase activity of the active site.

In terms of assembly, monomer. At least expressed in the liver and erythrocyte.

The protein localises to the cytoplasm. It carries out the reaction reduced riboflavin + NADP(+) = riboflavin + NADPH + 2 H(+). It catalyses the reaction bilirubin IXbeta + NADP(+) = biliverdin IXbeta + NADPH + H(+). The catalysed reaction is FMNH2 + NAD(+) = FMN + NADH + 2 H(+). The enzyme catalyses FMNH2 + NADP(+) = FMN + NADPH + 2 H(+). It carries out the reaction S-nitroso-CoA + L-cysteinyl-[protein] = S-nitroso-L-cysteinyl-[protein] + CoA. It catalyses the reaction L-cysteinyl-[SCAN] + S-nitroso-CoA = S-nitroso-L-cysteinyl-[SCAN] + CoA. The catalysed reaction is S-nitroso-L-cysteinyl-[SCAN] + L-cysteinyl-[protein] = L-cysteinyl-[SCAN] + S-nitroso-L-cysteinyl-[protein]. Enzyme that can both act as a NAD(P)H-dependent reductase and a S-nitroso-CoA-dependent nitrosyltransferase. Promotes fetal heme degradation during development. Also expressed in adult tissues, where it acts as a regulator of hematopoiesis, intermediary metabolism (glutaminolysis, glycolysis, TCA cycle and pentose phosphate pathway) and insulin signaling. Has a broad specificity oxidoreductase activity by catalyzing the NAD(P)H-dependent reduction of a variety of flavins, such as riboflavin, FAD or FMN, biliverdins, methemoglobin and PQQ (pyrroloquinoline quinone). Contributes to fetal heme catabolism by catalyzing reduction of biliverdin IXbeta into bilirubin IXbeta in the liver. Biliverdin IXbeta, which constitutes the major heme catabolite in the fetus is not present in adult. Does not reduce bilirubin IXalpha. Can also reduce the complexed Fe(3+) iron to Fe(2+) in the presence of FMN and NADPH. Acts as a protein nitrosyltransferase by catalyzing nitrosylation of cysteine residues of target proteins, such as HMOX2, INSR and IRS1. S-nitroso-CoA-dependent nitrosyltransferase activity is mediated via a 'ping-pong' mechanism: BLVRB first associates with both S-nitroso-CoA and protein substrate, nitric oxide group is then transferred from S-nitroso-CoA to Cys-109 and Cys-188 residues of BLVRB and from S-nitroso-BLVRB to the protein substrate. Inhibits insulin signaling by mediating nitrosylation of INSR and IRS1, leading to their inhibition. The polypeptide is Flavin reductase (NADPH) (BLVRB) (Bos taurus (Bovine)).